Reading from the N-terminus, the 597-residue chain is Uptake hydrogenase large subunit (597 aa).

Positions 75, 78, 576, and 579 each coordinate Ni(2+).

The protein belongs to the [NiFe]/[NiFeSe] hydrogenase large subunit family. As to quaternary structure, heterodimer of a large and a small subunit. Ni(2+) serves as cofactor.

The protein localises to the cell membrane. It carries out the reaction H2 + A = AH2. In terms of biological role, this enzyme recycles the H(2) produced by nitrogenase to increase the production of ATP and to protect nitrogenase against inhibition or damage by O(2) under carbon- or phosphate-limited conditions. This chain is Uptake hydrogenase large subunit (hupB), found in Rhodobacter capsulatus (Rhodopseudomonas capsulata).